The chain runs to 614 residues: MPITNTDESLSAASAPLKPGAFLHEIFSDRARQFPERTAVSDAARTLSYAQLDALSTKLAARLRDEGVTYGTRVGMYLPRSVDLVTSLLGILKAGGTYVPVDPQYPGKRVEHIVRDSELSLIIGDAANLPKISSLRVLALDELLSAPALQPAAQDTRIDPNNSTAYIIYTSGSTGEPKGVQVSHGNVSRLLESTQRAYGFNAQDVWSMFHSIGFDFSVWEIWGALAHGGQVAVVPYDISRSPAALRQWLADQRITVLSQTPSAFRGLDEADRGNTAPLALRYVVLGGEALPASVLRPWVERHGDQKPALINMYGITEATVHTTFKRVLAQDLETAAMVSLGKPLDGWRLHLLDANQAPVAAGTTGELYIEGAGVAQGYLNREALNVERFVELPGAVRAYRTGDLMTLESNGEYRYAGRCDEQLKISGFRIEPGEIEASLQTSPSVAAAHVGVHDYGDGDLRLVAYVVPGQGVDAWTEQARSEVAALMAENLPGYMRPSVYVPLAELPVTHHGKIDKQQLPSPAAGTALSGAADVKGLSEQEHFVLKVWSEDLGLKNIGVNDDFFDSGGTSLALIRSLSKLKTHYKINLDPGILADGATAKVLADHITRSLVQAH.

One can recognise a Carrier domain in the interval 535–610; sequence KGLSEQEHFV…VLADHITRSL (76 aa). At Ser-570 the chain carries O-(pantetheine 4'-phosphoryl)serine.

The protein belongs to the ATP-dependent AMP-binding enzyme family. Pantetheine 4'-phosphate serves as cofactor.

The catalysed reaction is holo-[peptidyl-carrier protein] + L-threonine + ATP = L-threonyl-[peptidyl-carrier protein] + AMP + diphosphate. Involved in the biosynthesis of syringomycin E, a cyclic lipodepsinonapeptide toxin with phytotoxic activity. Specifically adenylates L-threonine and loads it onto its peptidyl carrier domain, via a thioester linkage to the phosphopanthetheine moiety. Is highly specific for L-threonine. This chain is Syringomycin synthase SyrB1, found in Pseudomonas syringae pv. syringae.